A 106-amino-acid chain; its full sequence is Urease subunit beta (106 aa).

Belongs to the urease beta subunit family. In terms of assembly, heterotrimer of UreA (gamma), UreB (beta) and UreC (alpha) subunits. Three heterotrimers associate to form the active enzyme.

Its subcellular location is the cytoplasm. It catalyses the reaction urea + 2 H2O + H(+) = hydrogencarbonate + 2 NH4(+). It functions in the pathway nitrogen metabolism; urea degradation; CO(2) and NH(3) from urea (urease route): step 1/1. In Escherichia coli O157:H7, this protein is Urease subunit beta.